Reading from the N-terminus, the 242-residue chain is Probable septum site-determining protein MinC (242 aa).

The protein belongs to the MinC family. In terms of assembly, interacts with MinD and FtsZ.

Functionally, cell division inhibitor that blocks the formation of polar Z ring septums. Rapidly oscillates between the poles of the cell to destabilize FtsZ filaments that have formed before they mature into polar Z rings. Prevents FtsZ polymerization. This chain is Probable septum site-determining protein MinC, found in Buchnera aphidicola subsp. Schizaphis graminum (strain Sg).